The sequence spans 289 residues: tRNA dimethylallyltransferase (289 aa).

9 to 16 (GTTASGKT) provides a ligand contact to ATP. Residue 11 to 16 (TASGKT) coordinates substrate. Residues 34–37 (DSLC) form an interaction with substrate tRNA region.

It belongs to the IPP transferase family. Monomer. Mg(2+) is required as a cofactor.

The catalysed reaction is adenosine(37) in tRNA + dimethylallyl diphosphate = N(6)-dimethylallyladenosine(37) in tRNA + diphosphate. Functionally, catalyzes the transfer of a dimethylallyl group onto the adenine at position 37 in tRNAs that read codons beginning with uridine, leading to the formation of N6-(dimethylallyl)adenosine (i(6)A). The chain is tRNA dimethylallyltransferase from Campylobacter jejuni subsp. jejuni serotype O:23/36 (strain 81-176).